Reading from the N-terminus, the 673-residue chain is Acetoacetyl-CoA synthetase (673 aa).

The protein belongs to the ATP-dependent AMP-binding enzyme family.

The protein localises to the cytoplasm. Its subcellular location is the cytosol. It catalyses the reaction acetoacetate + ATP + CoA = acetoacetyl-CoA + AMP + diphosphate. In terms of biological role, converts acetoacetate to acetoacetyl-CoA in the cytosol. Ketone body-utilizing enzyme, responsible for the synthesis of cholesterol and fatty acids. This chain is Acetoacetyl-CoA synthetase (aacs), found in Danio rerio (Zebrafish).